The following is a 117-amino-acid chain: Minor capsid protein VP2 (117 aa).

Belongs to the lagovirus VP2 protein family. As to quaternary structure, homooligomer. The portal-like structure consists in 12 copies of VP2. Interacts with capsid protein VP1.

The protein resides in the virion. It localises to the host cytoplasm. Minor structural protein that forms a portal-like structure at a unique three-fold axis of symmetry, following binding to the host receptor. The channel formed by VP2 may allow the delivery of the viral genome through the host endosomal membrane. The sequence is that of Minor capsid protein VP2 from Oryctolagus cuniculus (Rabbit).